A 283-amino-acid chain; its full sequence is Gap junction alpha-6 protein (283 aa).

The Cytoplasmic segment spans residues 1 to 23 (MSDWSALHQLLEKVQPYSTAGGK). Residues 24-41 (VWIKVLFIFRILLLGTAI) form a helical membrane-spanning segment. At 42–76 (ESAWSDEQFEFHCNTQQPGCENVCYDHAFPISHVR) the chain is on the extracellular side. Residues 77–99 (LWVLQVIFVSVPILLYLAHVYYV) form a helical membrane-spanning segment. Residues 100–150 (VRQNKKLNKQEEELEAAHFNEASVERHLETIAGEQFKCGSEEQSKVKMRGR) are Cytoplasmic-facing. The helical transmembrane segment at 151-173 (LLLTYMASIFFKSVFEMAFLLIQ) threads the bilayer. The Extracellular portion of the chain corresponds to 174 to 208 (WYIYGFTLSALYICEQSPCPRRVDCFLSRPTEKTI). Residues 209-231 (FILFMFVVSVVSFVLDIIELFYV) traverse the membrane as a helical segment. Topologically, residues 232 to 283 (LFKAIKNRMRKAEDEVYCDELPCPSHVSSSTVLTTIDSSEQAVPVELSSVCI) are cytoplasmic.

The protein belongs to the connexin family. Alpha-type (group II) subfamily. A connexon is composed of a hexamer of connexins.

The protein localises to the cell membrane. It localises to the cell junction. Its subcellular location is the gap junction. One gap junction consists of a cluster of closely packed pairs of transmembrane channels, the connexons, through which materials of low MW diffuse from one cell to a neighboring cell. In Mus musculus (Mouse), this protein is Gap junction alpha-6 protein (Gja6).